We begin with the raw amino-acid sequence, 327 residues long: GMP reductase (327 aa).

Catalysis depends on Cys-175, which acts as the Thioimidate intermediate. An NADP(+)-binding site is contributed by 204–227 (IIADGGIRTPGDIAKSIRFGATMV).

It belongs to the IMPDH/GMPR family. GuaC type 2 subfamily.

The catalysed reaction is IMP + NH4(+) + NADP(+) = GMP + NADPH + 2 H(+). In terms of biological role, catalyzes the irreversible NADPH-dependent deamination of GMP to IMP. It functions in the conversion of nucleobase, nucleoside and nucleotide derivatives of G to A nucleotides, and in maintaining the intracellular balance of A and G nucleotides. This Clostridium acetobutylicum (strain ATCC 824 / DSM 792 / JCM 1419 / IAM 19013 / LMG 5710 / NBRC 13948 / NRRL B-527 / VKM B-1787 / 2291 / W) protein is GMP reductase.